The sequence spans 188 residues: Pyridoxal 5'-phosphate synthase subunit PdxT (188 aa).

G47 to S49 is a binding site for L-glutamine. C79 serves as the catalytic Nucleophile. L-glutamine-binding positions include R106 and I134–R135. Residues H169 and E171 each act as charge relay system in the active site.

The protein belongs to the glutaminase PdxT/SNO family. In terms of assembly, in the presence of PdxS, forms a dodecamer of heterodimers. Only shows activity in the heterodimer.

It catalyses the reaction aldehydo-D-ribose 5-phosphate + D-glyceraldehyde 3-phosphate + L-glutamine = pyridoxal 5'-phosphate + L-glutamate + phosphate + 3 H2O + H(+). It carries out the reaction L-glutamine + H2O = L-glutamate + NH4(+). Its pathway is cofactor biosynthesis; pyridoxal 5'-phosphate biosynthesis. In terms of biological role, catalyzes the hydrolysis of glutamine to glutamate and ammonia as part of the biosynthesis of pyridoxal 5'-phosphate. The resulting ammonia molecule is channeled to the active site of PdxS. The sequence is that of Pyridoxal 5'-phosphate synthase subunit PdxT from Caldicellulosiruptor saccharolyticus (strain ATCC 43494 / DSM 8903 / Tp8T 6331).